The sequence spans 218 residues: uncharacterized protein (218 aa).

The protein belongs to the HAD-like hydrolase superfamily.

Its subcellular location is the cytoplasm. The protein resides in the nucleus. This is an uncharacterized protein from Saccharomyces cerevisiae (strain ATCC 204508 / S288c) (Baker's yeast).